Reading from the N-terminus, the 312-residue chain is Olfactory receptor-like protein COR6 (312 aa).

Residues 1-26 (MASGNCTTPTTFILSGLTDNPGLQMP) lie on the Extracellular side of the membrane. The N-linked (GlcNAc...) asparagine glycan is linked to Asn-5. Residues 27–49 (LFMVFLAIYTITLLTNLGLIALI) traverse the membrane as a helical segment. At 50 to 57 (SIDLQLQT) the chain is on the cytoplasmic side. A helical transmembrane segment spans residues 58-79 (PMYIFLQNLSFTDAVYSTVITP). Residues 80 to 100 (KMLATFLEETKTISYVGCILQ) lie on the Extracellular side of the membrane. Cys-97 and Cys-179 form a disulfide bridge. A helical membrane pass occupies residues 101–120 (YFSFVLLTVRECLLLAVMAY). Residues 121-139 (DRYAAICKPLLYPAIMTKA) are Cytoplasmic-facing. Residues 140–164 (VCWRLVKGLYSLAFLNFLVHTSGLL) traverse the membrane as a helical segment. The Extracellular segment spans residues 165–205 (KLSFCSSNVVNHFFCDNSPLFQISSSSTALNELLVFIFGSL). Residues 206 to 226 (FVMSSIITILISYVFIILTVV) form a helical membrane-spanning segment. Over 227 to 239 (RIRSKERKYKAFS) the chain is Cytoplasmic. The chain crosses the membrane as a helical span at residues 240-260 (TCTSHLMAVSLFHGTIVFMYF). Residues 261-271 (QPANNFSLDKD) lie on the Extracellular side of the membrane. The helical transmembrane segment at 272–292 (KIMSLFYTVVIPMLNPLIYSW) threads the bilayer. Topologically, residues 293-312 (RNKEVKDALHRAIATAVLFH) are cytoplasmic.

The protein belongs to the G-protein coupled receptor 1 family.

It localises to the cell membrane. Its function is as follows. Odorant receptor. In Gallus gallus (Chicken), this protein is Olfactory receptor-like protein COR6 (COR6).